The primary structure comprises 467 residues: UDP-N-acetylmuramoylalanine--D-glutamate ligase (467 aa).

G121–T127 contacts ATP.

This sequence belongs to the MurCDEF family.

The protein resides in the cytoplasm. The enzyme catalyses UDP-N-acetyl-alpha-D-muramoyl-L-alanine + D-glutamate + ATP = UDP-N-acetyl-alpha-D-muramoyl-L-alanyl-D-glutamate + ADP + phosphate + H(+). It participates in cell wall biogenesis; peptidoglycan biosynthesis. Cell wall formation. Catalyzes the addition of glutamate to the nucleotide precursor UDP-N-acetylmuramoyl-L-alanine (UMA). In Chelativorans sp. (strain BNC1), this protein is UDP-N-acetylmuramoylalanine--D-glutamate ligase.